The following is a 283-amino-acid chain: 2-hydroxymuconate semialdehyde hydrolase (283 aa).

The AB hydrolase-1 domain maps to 32-262; sequence LMMIHGSGPG…QCGHWTQIEH (231 aa). Residues Ser107, Asp228, and His256 contribute to the active site.

It belongs to the DmpD/TodF/XylF esterase family.

The enzyme catalyses (2Z,4E)-2-hydroxy-6-oxohexa-2,4-dienoate + H2O = 2-oxopent-4-enoate + formate + H(+). It functions in the pathway aromatic compound metabolism; benzoate degradation via hydroxylation. In terms of biological role, catalyzes the conversion of 2-hydroxymuconate semialdehyde to 2-hydroxypent-2,4-dienoate. In Pseudomonas sp. (strain CF600), this protein is 2-hydroxymuconate semialdehyde hydrolase (dmpD).